Here is a 704-residue protein sequence, read N- to C-terminus: Polyribonucleotide nucleotidyltransferase (704 aa).

Positions 488 and 494 each coordinate Mg(2+). A KH domain is found at 555 to 614 (PRITTIKINPEKIRDVIGKGGATIRALTEETGTTIELDDDGTVKIASSNGEATKEAIRRI). Positions 624–692 (GTVYNGKVVR…RQGRVRLSMK (69 aa)) constitute an S1 motif domain.

This sequence belongs to the polyribonucleotide nucleotidyltransferase family. As to quaternary structure, component of the RNA degradosome, which is a multiprotein complex involved in RNA processing and mRNA degradation. It depends on Mg(2+) as a cofactor.

It localises to the cytoplasm. The catalysed reaction is RNA(n+1) + phosphate = RNA(n) + a ribonucleoside 5'-diphosphate. In terms of biological role, involved in mRNA degradation. Catalyzes the phosphorolysis of single-stranded polyribonucleotides processively in the 3'- to 5'-direction. This is Polyribonucleotide nucleotidyltransferase from Shewanella halifaxensis (strain HAW-EB4).